A 597-amino-acid chain; its full sequence is Elongation factor 4 (597 aa).

Residues 2–184 form the tr-type G domain; it reads DHIRNFSIIA…SLIAKVPPPK (183 aa). Residues 14–19 and 131–134 each bind GTP; these read DHGKST and NKID.

Belongs to the TRAFAC class translation factor GTPase superfamily. Classic translation factor GTPase family. LepA subfamily.

It localises to the cell inner membrane. The enzyme catalyses GTP + H2O = GDP + phosphate + H(+). Required for accurate and efficient protein synthesis under certain stress conditions. May act as a fidelity factor of the translation reaction, by catalyzing a one-codon backward translocation of tRNAs on improperly translocated ribosomes. Back-translocation proceeds from a post-translocation (POST) complex to a pre-translocation (PRE) complex, thus giving elongation factor G a second chance to translocate the tRNAs correctly. Binds to ribosomes in a GTP-dependent manner. The polypeptide is Elongation factor 4 (Burkholderia pseudomallei (strain 1710b)).